The following is a 269-amino-acid chain: Spermatogenesis-associated serine-rich protein 1 (269 aa).

Residues 1–14 (MESSKDTQHGDALE) are compositionally biased toward basic and acidic residues. The tract at residues 1–92 (MESSKDTQHG…SKVSLPEIPK (92 aa)) is disordered. Residues 18-38 (CLANRTSSRQNKRTSLSSSDG) are compositionally biased toward polar residues. The residue at position 54 (threonine 54) is a Phosphothreonine. The span at 67-86 (SSSSSSSSSSAQSNRSSKVS) shows a compositional bias: low complexity. Residues serine 72, serine 75, and serine 82 each carry the phosphoserine modification.

The polypeptide is Spermatogenesis-associated serine-rich protein 1 (Spats1) (Mus musculus (Mouse)).